Consider the following 197-residue polypeptide: FMN-dependent NADH:quinone oxidoreductase (197 aa).

Residues Ser10, 16 to 18 (SKS), and 96 to 99 (MYNF) each bind FMN.

Belongs to the azoreductase type 1 family. In terms of assembly, homodimer. Requires FMN as cofactor.

It catalyses the reaction 2 a quinone + NADH + H(+) = 2 a 1,4-benzosemiquinone + NAD(+). It carries out the reaction N,N-dimethyl-1,4-phenylenediamine + anthranilate + 2 NAD(+) = 2-(4-dimethylaminophenyl)diazenylbenzoate + 2 NADH + 2 H(+). Functionally, quinone reductase that provides resistance to thiol-specific stress caused by electrophilic quinones. In terms of biological role, also exhibits azoreductase activity. Catalyzes the reductive cleavage of the azo bond in aromatic azo compounds to the corresponding amines. In Marinomonas sp. (strain MWYL1), this protein is FMN-dependent NADH:quinone oxidoreductase.